The primary structure comprises 424 residues: Proline--tRNA ligase (424 aa).

It belongs to the class-II aminoacyl-tRNA synthetase family. ProS type 2 subfamily. Homodimer.

The protein resides in the cytoplasm. The catalysed reaction is tRNA(Pro) + L-proline + ATP = L-prolyl-tRNA(Pro) + AMP + diphosphate. Its function is as follows. Catalyzes the attachment of proline to tRNA(Pro) in a two-step reaction: proline is first activated by ATP to form Pro-AMP and then transferred to the acceptor end of tRNA(Pro). This is Proline--tRNA ligase from Ehrlichia canis (strain Jake).